The sequence spans 1217 residues: ATP-dependent RNA helicase DHX30 (1217 aa).

A phosphoserine mark is found at aspartate 15 and serine 29. A DRBM domain is found at 76 to 144; that stretch reads PKNLLNSVIG…QAAAAACQLF (69 aa). The tract at residues 176 to 223 is disordered; the sequence is WWRPEPTMPPTSWRQLNPENIRPGGPAGLSRSLGREEEEDEEEELEEG. A compositionally biased stretch (acidic residues) spans 211–223; sequence EEEEDEEEELEEG. A phosphoserine mark is found at serine 249 and serine 403. The Helicase ATP-binding domain occupies 467–635; sequence LSAIEQHPVV…FGGCPVIKVP (169 aa). Residue 480–487 coordinates ATP; it reads GDTGCGKT. The short motif at 582-585 is the DEAH box element; sequence DEVH. The 174-residue stretch at 677-850 folds into the Helicase C-terminal domain; sequence LVTDLVLHID…NLVLQAKIHM (174 aa).

This sequence belongs to the DEAD box helicase family. DEAH subfamily. In terms of assembly, identified in a complex with TFAM and SSBP1. Interacts (via N-terminus) with ZC3HAV1 (via N-terminal domain) in an RNA-independent manner. Found in a complex with GRSF1, DDX28, FASTKD2 and FASTKD5. Phosphorylated on Ser-15. As to expression, expressed in the heart, brain, spleen, lung, liver, skeletal muscle, kidney, and testis. Expression is strongest in the testis and brain, while the lowest levels of expression are found in the spleen and lung.

It localises to the cytoplasm. It is found in the mitochondrion. The protein resides in the mitochondrion matrix. Its subcellular location is the mitochondrion nucleoid. It carries out the reaction ATP + H2O = ADP + phosphate + H(+). Functionally, RNA-dependent helicase. Plays an important role in the assembly of the mitochondrial large ribosomal subunit. Required for optimal function of the zinc-finger antiviral protein ZC3HAV1. Associates with mitochondrial DNA. Involved in nervous system development and differentiation through its involvement in the up-regulation of a number of genes which are required for neurogenesis, including GSC, NCAM1, neurogenin, and NEUROD. The sequence is that of ATP-dependent RNA helicase DHX30 (Dhx30) from Mus musculus (Mouse).